Consider the following 307-residue polypeptide: NAD kinase (307 aa).

D80 (proton acceptor) is an active-site residue. Residues 80-81 (DG), H85, 154-155 (ND), H165, H182, D184, 195-200 (TAYALS), and Q254 contribute to the NAD(+) site.

Belongs to the NAD kinase family. The cofactor is a divalent metal cation.

It localises to the cytoplasm. It carries out the reaction NAD(+) + ATP = ADP + NADP(+) + H(+). Involved in the regulation of the intracellular balance of NAD and NADP, and is a key enzyme in the biosynthesis of NADP. Catalyzes specifically the phosphorylation on 2'-hydroxyl of the adenosine moiety of NAD to yield NADP. In Acinetobacter baylyi (strain ATCC 33305 / BD413 / ADP1), this protein is NAD kinase.